We begin with the raw amino-acid sequence, 763 residues long: Photosystem I P700 chlorophyll a apoprotein A1 (763 aa).

8 consecutive transmembrane segments (helical) span residues isoleucine 72–alanine 95, leucine 158–histidine 181, leucine 197–leucine 221, threonine 305–tyrosine 323, tryptophan 360–tyrosine 383, leucine 399–valine 425, alanine 447–histidine 469, and phenylalanine 544–leucine 562. [4Fe-4S] cluster is bound by residues cysteine 586 and cysteine 595. The next 2 membrane-spanning stretches (helical) occupy residues histidine 602–tryptophan 623 and threonine 677–phenylalanine 699. Chlorophyll a' is bound at residue histidine 688. Chlorophyll a contacts are provided by methionine 696 and tyrosine 704. Tryptophan 705 lines the phylloquinone pocket. The chain crosses the membrane as a helical span at residues alanine 737–alanine 757.

This sequence belongs to the PsaA/PsaB family. As to quaternary structure, the PsaA/B heterodimer binds the P700 chlorophyll special pair and subsequent electron acceptors. PSI consists of a core antenna complex that captures photons, and an electron transfer chain that converts photonic excitation into a charge separation. The cyanobacterial PSI reaction center is composed of one copy each of PsaA,B,C,D,E,F,I,J,K,L,M and X, and forms trimeric complexes. Requires PSI electron transfer chain: 5 chlorophyll a, 1 chlorophyll a', 2 phylloquinones and 3 4Fe-4S clusters. PSI core antenna: 90 chlorophyll a, 22 carotenoids, 3 phospholipids and 1 galactolipid. P700 is a chlorophyll a/chlorophyll a' dimer, A0 is one or more chlorophyll a, A1 is one or both phylloquinones and FX is a shared 4Fe-4S iron-sulfur center. as cofactor.

The protein resides in the cellular thylakoid membrane. The catalysed reaction is reduced [plastocyanin] + hnu + oxidized [2Fe-2S]-[ferredoxin] = oxidized [plastocyanin] + reduced [2Fe-2S]-[ferredoxin]. Functionally, psaA and PsaB bind P700, the primary electron donor of photosystem I (PSI), as well as the electron acceptors A0, A1 and FX. PSI is a plastocyanin/cytochrome c6-ferredoxin oxidoreductase, converting photonic excitation into a charge separation, which transfers an electron from the donor P700 chlorophyll pair to the spectroscopically characterized acceptors A0, A1, FX, FA and FB in turn. Oxidized P700 is reduced on the lumenal side of the thylakoid membrane by plastocyanin or cytochrome c6. The sequence is that of Photosystem I P700 chlorophyll a apoprotein A1 from Synechococcus elongatus (strain ATCC 33912 / PCC 7942 / FACHB-805) (Anacystis nidulans R2).